The chain runs to 494 residues: UPF0371 protein SPH_0451 (494 aa).

The protein belongs to the UPF0371 family.

This is UPF0371 protein SPH_0451 from Streptococcus pneumoniae (strain Hungary19A-6).